The chain runs to 280 residues: 4-diphosphocytidyl-2-C-methyl-D-erythritol kinase (280 aa).

Residue K8 is part of the active site. Residue 91–101 (PVAAGLAGGST) participates in ATP binding. Residue D133 is part of the active site.

The protein belongs to the GHMP kinase family. IspE subfamily.

The enzyme catalyses 4-CDP-2-C-methyl-D-erythritol + ATP = 4-CDP-2-C-methyl-D-erythritol 2-phosphate + ADP + H(+). It functions in the pathway isoprenoid biosynthesis; isopentenyl diphosphate biosynthesis via DXP pathway; isopentenyl diphosphate from 1-deoxy-D-xylulose 5-phosphate: step 3/6. Functionally, catalyzes the phosphorylation of the position 2 hydroxy group of 4-diphosphocytidyl-2C-methyl-D-erythritol. In Clostridium botulinum (strain Okra / Type B1), this protein is 4-diphosphocytidyl-2-C-methyl-D-erythritol kinase.